We begin with the raw amino-acid sequence, 204 residues long: MFLFAGLGNPGPKYAGNRHNIGFMAVDAIVRRHRLSPWRRRFQGAVSEGEIAGEKVLALLPETFMNESGRAVAEAAKFYKIPLENIFVFHDELDLPPAKIRVKKGGGNAGHNGLRSITAQCGNDYWRVRLGIGHPGDKSLVHSYVLNDFGKAEREWVEAVNTACADFAPALIGGKAEDFQNRAHLFLEAQGFTDVKPLGGARAS.

Tyrosine 14 contributes to the tRNA binding site. The active-site Proton acceptor is histidine 19. TRNA is bound by residues phenylalanine 64, asparagine 66, and asparagine 112.

The protein belongs to the PTH family. In terms of assembly, monomer.

The protein resides in the cytoplasm. The enzyme catalyses an N-acyl-L-alpha-aminoacyl-tRNA + H2O = an N-acyl-L-amino acid + a tRNA + H(+). Functionally, hydrolyzes ribosome-free peptidyl-tRNAs (with 1 or more amino acids incorporated), which drop off the ribosome during protein synthesis, or as a result of ribosome stalling. In terms of biological role, catalyzes the release of premature peptidyl moieties from peptidyl-tRNA molecules trapped in stalled 50S ribosomal subunits, and thus maintains levels of free tRNAs and 50S ribosomes. The sequence is that of Peptidyl-tRNA hydrolase from Azorhizobium caulinodans (strain ATCC 43989 / DSM 5975 / JCM 20966 / LMG 6465 / NBRC 14845 / NCIMB 13405 / ORS 571).